A 318-amino-acid polypeptide reads, in one-letter code: Protein LplB (318 aa).

6 helical membrane passes run 35–55 (LIPGLLYFLIFKYLPMWGVLI), 94–114 (LMLASLDLLFAFPAPLILALL), 130–150 (FIYVPHFVSWTIVVSITFVFF), 182–202 (IVMQSIWKETGWGTILFLAAL), 236–256 (IIVLLILRIGSFLNLGFEQVY), and 289–309 (AVGLFKSVVGIILIFGANYIA). The ABC transmembrane type-1 domain maps to 90 to 305 (LRNTLMLASL…VVGIILIFGA (216 aa)).

It belongs to the binding-protein-dependent transport system permease family. MalFG subfamily.

The protein resides in the cell membrane. This is Protein LplB (lplB) from Bacillus subtilis (strain 168).